The chain runs to 719 residues: Putative alpha-1,3-mannosyltransferase MNT4 (719 aa).

Residues Met1–His4 are Cytoplasmic-facing. The helical transmembrane segment at Leu5–Phe22 threads the bilayer. Over Arg23–Asp719 the chain is Lumenal. N-linked (GlcNAc...) asparagine glycosylation is found at Asn148, Asn273, and Asn449.

Belongs to the MNN1/MNT family.

The protein localises to the golgi apparatus membrane. It participates in protein modification; protein glycosylation. In terms of biological role, responsible for addition of the terminal mannose residues to the outer chain of core N-linked polysaccharides and to O-linked mannotriose. Implicated in late Golgi modifications. This chain is Putative alpha-1,3-mannosyltransferase MNT4 (MNT4), found in Candida albicans (strain SC5314 / ATCC MYA-2876) (Yeast).